Reading from the N-terminus, the 290-residue chain is Oxaloacetate decarboxylase 2 (290 aa).

Serine 50 is a binding site for substrate. Aspartate 88 is a binding site for Mg(2+). Substrate contacts are provided by arginine 159 and histidine 235.

This sequence belongs to the isocitrate lyase/PEP mutase superfamily. Oxaloacetate decarboxylase family. In terms of assembly, homotetramer; dimer of dimers. It depends on Mg(2+) as a cofactor.

The enzyme catalyses oxaloacetate + H(+) = pyruvate + CO2. Its function is as follows. Catalyzes the decarboxylation of oxaloacetate into pyruvate. Seems to play a role in maintaining cellular concentrations of bicarbonate and pyruvate. This chain is Oxaloacetate decarboxylase 2, found in Pseudomonas fluorescens (strain Pf0-1).